Here is a 109-residue protein sequence, read N- to C-terminus: Phosphoribosyl-AMP cyclohydrolase (109 aa).

D80 serves as a coordination point for Mg(2+). C81 is a Zn(2+) binding site. D82 and D84 together coordinate Mg(2+). 2 residues coordinate Zn(2+): C97 and C104.

Belongs to the PRA-CH family. Homodimer. It depends on Mg(2+) as a cofactor. Zn(2+) is required as a cofactor.

The protein resides in the cytoplasm. It carries out the reaction 1-(5-phospho-beta-D-ribosyl)-5'-AMP + H2O = 1-(5-phospho-beta-D-ribosyl)-5-[(5-phospho-beta-D-ribosylamino)methylideneamino]imidazole-4-carboxamide. It functions in the pathway amino-acid biosynthesis; L-histidine biosynthesis; L-histidine from 5-phospho-alpha-D-ribose 1-diphosphate: step 3/9. In terms of biological role, catalyzes the hydrolysis of the adenine ring of phosphoribosyl-AMP. In Clostridium beijerinckii (strain ATCC 51743 / NCIMB 8052) (Clostridium acetobutylicum), this protein is Phosphoribosyl-AMP cyclohydrolase.